A 199-amino-acid polypeptide reads, in one-letter code: 7-methyl-GTP pyrophosphatase (199 aa).

Residue Asp-76 is the Proton acceptor of the active site.

This sequence belongs to the Maf family. YceF subfamily. A divalent metal cation serves as cofactor.

Its subcellular location is the cytoplasm. The catalysed reaction is N(7)-methyl-GTP + H2O = N(7)-methyl-GMP + diphosphate + H(+). Its function is as follows. Nucleoside triphosphate pyrophosphatase that hydrolyzes 7-methyl-GTP (m(7)GTP). May have a dual role in cell division arrest and in preventing the incorporation of modified nucleotides into cellular nucleic acids. This chain is 7-methyl-GTP pyrophosphatase, found in Brucella abortus biovar 1 (strain 9-941).